Here is a 796-residue protein sequence, read N- to C-terminus: Nuclear GTPase SLIP-GC (796 aa).

107 to 114 (GITGAGKS) lines the GTP pocket. Coiled-coil stretches lie at residues 158 to 185 (SDQEWKAELKDLTKLLHRAEQSGEEEAD) and 742 to 776 (GLCKELADVRNEQKEMEKLYRSLREVAENAQLRRS).

It localises to the nucleus speckle. Functionally, nuclear GTPase found in germinal center B-cells, where it may inhibit function of the activation-induced cytidine deaminase AICDA. Reduces somatic hypermutation in B-cells which may enhance genome stability. The polypeptide is Nuclear GTPase SLIP-GC (Mus musculus (Mouse)).